Consider the following 636-residue polypeptide: MPALTYLLLAAIGASTVHSLPSQQSCNAPVTPSSFSSTSLDVVIVGGGTAGLVLASRLSESKKLQVGVIEGGYDRTNDPLIDVPNAANALGYQGAVFGNSTYDWEYTSVPQRGLGGRVLSYPSGKVLGGSSAINGLTIQRGSREDYDAWGNAFGNGPEWTFDALLPYFKRYERWHAPTLSATGDLNSDGLSAVHGTDGRISISYNNFFTGVDIPLTQAGIALGLGPTQNPDGGDDSLFPNFGASHSLDPATGNRSYAANGYYGQTERCRSNLHLLTGAVVTRIIWDKKKATKAVGVEYAVGNDKFTVKASKEVVLSAGSLRSPQILELSGVGNKTLLESLNIPVVVDIPQLGENLQEQFIAGTDFLVRDGVVTLDALGNNATFLAEQQNLYRTNKTGAFTYLSNVNAPTPIRSLVTEDQYKTMRAALDTYLASQTLTPLQIVQYNLVKQFLDGGKVATSSLLVVASGGLVSTPAAGQGYISVVSSPAHPLSRGNVHINTTDPLAYPLIDSAFLTNPWDAQATINVMKFVRRWVAKSDIIESPGTPPQAADEWSDDQWIAYLQSVLGTAHHPVGTAAMASQKLGGVVDPRFKVYGLKNVRIVDASVFPMHIGVAPSSTTYMLAEKAADAIKKDLNAY.

The first 19 residues, 1–19 (MPALTYLLLAAIGASTVHS), serve as a signal peptide directing secretion. FAD-binding positions include 49-50 (TA) and 70-71 (EG). Asn99 is a glycosylation site (N-linked (GlcNAc...) asparagine). Residues Trp104 and 134–137 (NGLT) each bind FAD. An N-linked (GlcNAc...) asparagine glycan is attached at Asn253. Residue Val280 coordinates FAD. N-linked (GlcNAc...) asparagine glycosylation is found at Asn333, Asn380, Asn394, and Asn498. The active-site Proton acceptor is His570. FAD-binding positions include Ala603 and 614–615 (PS).

The protein belongs to the GMC oxidoreductase family. FAD serves as cofactor.

It participates in secondary metabolite biosynthesis. Dehydrogenase, part of the gene cluster that mediates the biosynthesis of melleolides, a range of antifungal and phytotoxic polyketide derivatives composed of an orsellinic acid (OA) moiety esterified to various sesquiterpene alcohols. The first step in melleolides biosynthesis is performed by the delta(6)-protoilludene synthase PRO1 which catalyzes the cyclization of farnesyl diphosphate to protoilludene. The orsellinic acid synthase armB produces OA by condensing acetyl-CoA with 3 malonyl-CoA units in a three-round chain elongation reaction folowed by a C2-C7 ring closure. ArmB further catalyzes the trans-esterification of OA to the various sesquiterpene alcohols resulting from the hydroxylation of protoilludene. The melleolides cluster also includes 5 cytochrome P450 monooxygenases, 4 NAD(+)-dependent oxidoreductases, one flavin-dependent oxidoreductase, and one O-methyltransferase. The cytochrome P450 monooxygenases may be involved in protoilludene hydroxylation to elaborate melleolides with multiple alcohol groups, such as melleolide D, which carries alcohol functionalities at C-4, C-5, C-10, and C-13. The role of the NAD(+)-dependent enzymes remains unknown. Numerous melleolides, including arnamial, show 5'-O-methylation of the aromatic moiety which may be catalyzed by the methyltransferase encoded in the cluster. The flavin-dependent oxidoreductase might represent the dehydrogenase yielding the aldehyde in position 1 of arnamial and other melleolides. Finally, several halogenase localized outside of the cluster, are able to catalyze the transfer of a single chlorine atom to the melleolide backbone, resulting in a 6'-chloromelleolide product. The chain is Dehydrogenase ARMGADRAFT_1018426 from Armillaria gallica (Bulbous honey fungus).